Reading from the N-terminus, the 148-residue chain is Snaclec 2 (148 aa).

A signal peptide spans 1-23 (MGRFIFVSFGLLVVFLSLSGTEA). Disulfide bonds link Cys27–Cys38, Cys55–Cys144, and Cys121–Cys136. Residues 34–145 (YDQNCYKAFE…CSGTHSFVCK (112 aa)) enclose the C-type lectin domain.

It belongs to the snaclec family. In terms of assembly, heterodimer; disulfide-linked. In terms of tissue distribution, expressed by the venom gland.

The protein localises to the secreted. Interferes with one step of hemostasis (modulation of platelet aggregation, or coagulation cascade, for example). The protein is Snaclec 2 of Echis ocellatus (Ocellated saw-scaled viper).